The primary structure comprises 612 residues: UvrABC system protein C (612 aa).

Residues 20–98 (THSGVYRMLD…IKQHRPKYNI (79 aa)) form the GIY-YIG domain. Residues 208-243 (STVLEEISAKMYQASEDMEYEKAQVYRDQLVVLRKL) enclose the UVR domain.

This sequence belongs to the UvrC family. Interacts with UvrB in an incision complex.

It localises to the cytoplasm. The UvrABC repair system catalyzes the recognition and processing of DNA lesions. UvrC both incises the 5' and 3' sides of the lesion. The N-terminal half is responsible for the 3' incision and the C-terminal half is responsible for the 5' incision. This chain is UvrABC system protein C, found in Francisella tularensis subsp. novicida (strain U112).